Here is a 203-residue protein sequence, read N- to C-terminus: Probable chemoreceptor glutamine deamidase CheD (203 aa).

Belongs to the CheD family.

It carries out the reaction L-glutaminyl-[protein] + H2O = L-glutamyl-[protein] + NH4(+). Functionally, probably deamidates glutamine residues to glutamate on methyl-accepting chemotaxis receptors (MCPs), playing an important role in chemotaxis. This Herminiimonas arsenicoxydans protein is Probable chemoreceptor glutamine deamidase CheD.